The sequence spans 97 residues: Large ribosomal subunit protein bL36m (97 aa).

Belongs to the bacterial ribosomal protein bL36 family. Component of the mitochondrial ribosome large subunit (39S) which comprises a 16S rRNA and about 50 distinct proteins.

It localises to the mitochondrion. In Rattus norvegicus (Rat), this protein is Large ribosomal subunit protein bL36m (Mrpl36).